Consider the following 231-residue polypeptide: Large ribosomal subunit protein uL1 (231 aa).

Belongs to the universal ribosomal protein uL1 family. In terms of assembly, part of the 50S ribosomal subunit.

Functionally, binds directly to 23S rRNA. The L1 stalk is quite mobile in the ribosome, and is involved in E site tRNA release. Its function is as follows. Protein L1 is also a translational repressor protein, it controls the translation of the L11 operon by binding to its mRNA. This chain is Large ribosomal subunit protein uL1, found in Paracidovorax citrulli (strain AAC00-1) (Acidovorax citrulli).